The chain runs to 212 residues: ER lumen protein-retaining receptor 2 (212 aa).

The Lumenal segment spans residues M1–F4. A helical transmembrane segment spans residues R5 to W24. The Cytoplasmic portion of the chain corresponds to N25 to I32. Residues S33 to F52 form a helical membrane-spanning segment. Positions R47–Y48 are interaction with the K-D-E-L motif on target proteins. Residues T53 to L58 lie on the Lumenal side of the membrane. A helical membrane pass occupies residues Y59–Y79. Residues M80–T92 lie on the Cytoplasmic side of the membrane. The helical transmembrane segment at F93–N110 threads the bilayer. Over H111–L116 the chain is Lumenal. The chain crosses the membrane as a helical span at residues E117–L135. Topologically, residues F136–T149 are cytoplasmic. Residues H150–W168 traverse the membrane as a helical segment. The tract at residues R159–R169 is interaction with the K-D-E-L motif on target proteins. The Lumenal portion of the chain corresponds to R169 to L178. A helical membrane pass occupies residues I179–V199. At T200–A212 the chain is on the cytoplasmic side. The important for recycling of cargo proteins with the sequence motif K-D-E-L from the Golgi to the endoplasmic reticulum stretch occupies residues K204–K207.

It belongs to the ERD2 family.

Its subcellular location is the endoplasmic reticulum membrane. The protein resides in the golgi apparatus membrane. It is found in the cytoplasmic vesicle. The protein localises to the COPI-coated vesicle membrane. Receptor for the C-terminal sequence motif K-D-E-L that is present on endoplasmic reticulum resident proteins and that mediates their recycling from the Golgi back to the endoplasmic reticulum. Binding is pH dependent, and is optimal at pH 5-5.4. The sequence is that of ER lumen protein-retaining receptor 2 (kdelr2) from Xenopus laevis (African clawed frog).